The sequence spans 680 residues: Pescadillo homolog (680 aa).

A disordered region spans residues 310 to 330 (LDQAKDEQTAETTEESSDTID). One can recognise a BRCT domain in the interval 351–470 (QAGSLFAPFT…KLVRPDLYSP (120 aa)). The segment at 472–680 (ATLPPHLSPW…RRKLEKGAAK (209 aa)) is disordered. The stretch at 496–523 (AEQEEEGEAEMAEDSDEEMEEAADEKSK) forms a coiled coil. The span at 497-518 (EQEEEGEAEMAEDSDEEMEEAA) shows a compositional bias: acidic residues. Positions 519–529 (DEKSKTASKDE) are enriched in basic and acidic residues. 2 stretches are compositionally biased toward acidic residues: residues 530 to 543 (AESESEEDDDDESV) and 551 to 585 (GTDDDESESESEEEDEDFGGFEDDEAASESEDEEE). Residues 586 to 596 (VARTQHQKELE) are compositionally biased toward basic and acidic residues. The stretch at 613–680 (ASKKKASQAK…RRKLEKGAAK (68 aa)) forms a coiled coil. A compositionally biased stretch (basic residues) spans 616-628 (KKASQAKKIAAKK). A compositionally biased stretch (basic and acidic residues) spans 629 to 639 (RKEEEEIERQK).

The protein belongs to the pescadillo family. In terms of assembly, component of the NOP7 complex, composed of erb1, nop7 and ytm1. The complex is held together by erb1, which interacts with nop7 via its N-terminal domain and with ytm1 via a high-affinity interaction between the seven-bladed beta-propeller domains of the 2 proteins. The NOP7 complex associates with the 66S pre-ribosome.

The protein localises to the nucleus. It is found in the nucleolus. The protein resides in the nucleoplasm. Component of the NOP7 complex, which is required for maturation of the 25S and 5.8S ribosomal RNAs and formation of the 60S ribosome. This Aspergillus clavatus (strain ATCC 1007 / CBS 513.65 / DSM 816 / NCTC 3887 / NRRL 1 / QM 1276 / 107) protein is Pescadillo homolog (nop7).